We begin with the raw amino-acid sequence, 344 residues long: GTPase Obg (344 aa).

The Obg domain maps to 1–159; that stretch reads MKFLDEAKVY…MWLILRLKLI (159 aa). The OBG-type G domain occupies 160 to 327; sequence ADAGLVGLPN…ALRAIQAQLD (168 aa). GTP is bound by residues 166-173, 191-195, 212-215, 279-282, and 308-310; these read GLPNAGKS, FTTLH, DIPG, SKAD, and SAA. Mg(2+) is bound by residues Ser-173 and Thr-193.

It belongs to the TRAFAC class OBG-HflX-like GTPase superfamily. OBG GTPase family. Monomer. Mg(2+) is required as a cofactor.

The protein localises to the cytoplasm. An essential GTPase which binds GTP, GDP and possibly (p)ppGpp with moderate affinity, with high nucleotide exchange rates and a fairly low GTP hydrolysis rate. Plays a role in control of the cell cycle, stress response, ribosome biogenesis and in those bacteria that undergo differentiation, in morphogenesis control. The chain is GTPase Obg from Methylorubrum extorquens (strain CM4 / NCIMB 13688) (Methylobacterium extorquens).